Consider the following 95-residue polypeptide: Co-chaperonin GroES (95 aa).

Belongs to the GroES chaperonin family. In terms of assembly, heptamer of 7 subunits arranged in a ring. Interacts with the chaperonin GroEL.

It is found in the cytoplasm. In terms of biological role, together with the chaperonin GroEL, plays an essential role in assisting protein folding. The GroEL-GroES system forms a nano-cage that allows encapsulation of the non-native substrate proteins and provides a physical environment optimized to promote and accelerate protein folding. GroES binds to the apical surface of the GroEL ring, thereby capping the opening of the GroEL channel. This chain is Co-chaperonin GroES, found in Streptococcus salivarius.